Consider the following 167-residue polypeptide: uncharacterized protein (167 aa).

Over residues 1–10 (MPLRRCRAWR) the composition is skewed to basic residues. Residues 1–23 (MPLRRCRAWRGHSQPGTGSRSNE) are disordered.

This is an uncharacterized protein from Sinorhizobium fredii (strain NBRC 101917 / NGR234).